Consider the following 101-residue polypeptide: uncharacterized protein (101 aa).

Residues 76-101 (KGNVTRRRKKTHLGNDDGKKEAQEKM) are disordered. Residues 88–101 (LGNDDGKKEAQEKM) are compositionally biased toward basic and acidic residues.

This is an uncharacterized protein from Homo sapiens (Human).